Here is a 92-residue protein sequence, read N- to C-terminus: C-C motif chemokine 3 (92 aa).

The first 23 residues, Met1–Ala23, serve as a signal peptide directing secretion. Intrachain disulfides connect Cys33–Cys57 and Cys34–Cys73.

This sequence belongs to the intercrine beta (chemokine CC) family. In terms of assembly, self-associates. Also heterodimer of MIP-1-alpha(4-69) and MIP-1-beta(3-69). Interacts with CCR1.

The protein localises to the secreted. Monokine with inflammatory and chemokinetic properties. Binds to CCR1, CCR4 and CCR5. One of the major HIV-suppressive factors produced by CD8+ T-cells. Recombinant MIP-1-alpha induces a dose-dependent inhibition of different strains of HIV-1, HIV-2, and simian immunodeficiency virus (SIV). The sequence is that of C-C motif chemokine 3 (CCL3) from Pan troglodytes (Chimpanzee).